The following is a 564-amino-acid chain: Eukaryotic translation initiation factor 3 subunit L (564 aa).

Serine 2 bears the N-acetylserine mark. Position 21 is a phosphoserine (serine 21). One can recognise a PCI domain in the interval 331 to 537 (DAIRVFANIL…IHIADTKVAR (207 aa)). N6-acetyllysine is present on residues lysine 465 and lysine 549.

It belongs to the eIF-3 subunit L family. In terms of assembly, component of the eukaryotic translation initiation factor 3 (eIF-3) complex, which is composed of 13 subunits: EIF3A, EIF3B, EIF3C, EIF3D, EIF3E, EIF3F, EIF3G, EIF3H, EIF3I, EIF3J, EIF3K, EIF3L and EIF3M. The eIF-3 complex appears to include 3 stable modules: module A is composed of EIF3A, EIF3B, EIF3G and EIF3I; module B is composed of EIF3F, EIF3H, and EIF3M; and module C is composed of EIF3C, EIF3D, EIF3E, EIF3K and EIF3L. EIF3C of module C binds EIF3B of module A and EIF3H of module B, thereby linking the three modules. EIF3J is a labile subunit that binds to the eIF-3 complex via EIF3B. The eIF-3 complex interacts with RPS6KB1 under conditions of nutrient depletion. Mitogenic stimulation leads to binding and activation of a complex composed of MTOR and RPTOR, leading to phosphorylation and release of RPS6KB1 and binding of EIF4B to eIF-3. Interacts with RRN3.

The protein localises to the cytoplasm. In terms of biological role, component of the eukaryotic translation initiation factor 3 (eIF-3) complex, which is required for several steps in the initiation of protein synthesis. The eIF-3 complex associates with the 40S ribosome and facilitates the recruitment of eIF-1, eIF-1A, eIF-2:GTP:methionyl-tRNAi and eIF-5 to form the 43S pre-initiation complex (43S PIC). The eIF-3 complex stimulates mRNA recruitment to the 43S PIC and scanning of the mRNA for AUG recognition. The eIF-3 complex is also required for disassembly and recycling of post-termination ribosomal complexes and subsequently prevents premature joining of the 40S and 60S ribosomal subunits prior to initiation. The eIF-3 complex specifically targets and initiates translation of a subset of mRNAs involved in cell proliferation, including cell cycling, differentiation and apoptosis, and uses different modes of RNA stem-loop binding to exert either translational activation or repression. The sequence is that of Eukaryotic translation initiation factor 3 subunit L from Pan troglodytes (Chimpanzee).